The chain runs to 206 residues: Imidazoleglycerol-phosphate dehydratase (206 aa).

Residues 1-21 (MTALDSSRLLQPRTASVHRRT) form a disordered region.

Belongs to the imidazoleglycerol-phosphate dehydratase family.

The protein localises to the cytoplasm. It carries out the reaction D-erythro-1-(imidazol-4-yl)glycerol 3-phosphate = 3-(imidazol-4-yl)-2-oxopropyl phosphate + H2O. The protein operates within amino-acid biosynthesis; L-histidine biosynthesis; L-histidine from 5-phospho-alpha-D-ribose 1-diphosphate: step 6/9. The polypeptide is Imidazoleglycerol-phosphate dehydratase (Synechococcus sp. (strain JA-2-3B'a(2-13)) (Cyanobacteria bacterium Yellowstone B-Prime)).